The chain runs to 271 residues: Dermonecrotic toxin SpeSicTox-betaIF1 (271 aa).

His3 is an active-site residue. Residues Glu23 and Asp25 each coordinate Mg(2+). The active-site Nucleophile is the His39. Intrachain disulfides connect Cys43/Cys49 and Cys45/Cys188. Asp83 is a Mg(2+) binding site.

Belongs to the arthropod phospholipase D family. Class II subfamily. It depends on Mg(2+) as a cofactor. As to expression, expressed by the venom gland.

The protein resides in the secreted. The enzyme catalyses an N-(acyl)-sphingosylphosphocholine = an N-(acyl)-sphingosyl-1,3-cyclic phosphate + choline. It carries out the reaction an N-(acyl)-sphingosylphosphoethanolamine = an N-(acyl)-sphingosyl-1,3-cyclic phosphate + ethanolamine. The catalysed reaction is a 1-acyl-sn-glycero-3-phosphocholine = a 1-acyl-sn-glycero-2,3-cyclic phosphate + choline. It catalyses the reaction a 1-acyl-sn-glycero-3-phosphoethanolamine = a 1-acyl-sn-glycero-2,3-cyclic phosphate + ethanolamine. Its function is as follows. Dermonecrotic toxins cleave the phosphodiester linkage between the phosphate and headgroup of certain phospholipids (sphingolipid and lysolipid substrates), forming an alcohol (often choline) and a cyclic phosphate. This toxin acts on sphingomyelin (SM). It may also act on ceramide phosphoethanolamine (CPE), lysophosphatidylcholine (LPC) and lysophosphatidylethanolamine (LPE), but not on lysophosphatidylserine (LPS), and lysophosphatidylglycerol (LPG). It acts by transphosphatidylation, releasing exclusively cyclic phosphate products as second products. Induces dermonecrosis, hemolysis, increased vascular permeability, edema, inflammatory response, and platelet aggregation. In Sicarius peruensis (Six-eyed sand spider), this protein is Dermonecrotic toxin SpeSicTox-betaIF1.